We begin with the raw amino-acid sequence, 79 residues long: Calcium/calmodulin-dependent protein kinase II inhibitor 2 (79 aa).

The interval Lys43–Lys69 is inhibitory domain.

The protein belongs to the CAMK2N family.

The protein localises to the nucleus. Its subcellular location is the cytoplasm. It is found in the cytosol. Its function is as follows. Potent and specific cellular inhibitor of CaM-kinase II (CAMK2). Traps Ca(2+)/calmodulin on CAMK2. The sequence is that of Calcium/calmodulin-dependent protein kinase II inhibitor 2 (camk2n2) from Xenopus tropicalis (Western clawed frog).